Reading from the N-terminus, the 747-residue chain is Kinesin-like protein KIF3B (747 aa).

An N-acetylmethionine modification is found at Met-1. Position 2 is an N-acetylserine; in Kinesin-like protein KIF3B, N-terminally processed (Ser-2). Positions 9–340 constitute a Kinesin motor domain; sequence SVRVVVRCRP…LRYANRAKNI (332 aa). 96–103 contributes to the ATP binding site; that stretch reads GQTGTGKT. The stretch at 346 to 579 forms a coiled coil; that stretch reads VNEDPKDALL…EQTQNELTRE (234 aa). Disordered regions lie at residues 374–412 and 699–747; these read IGRR…DKDD and QVDA…LVPK. Acidic residues predominate over residues 393-411; the sequence is GEEEEEEGEEGEEEGDDKD. The globular stretch occupies residues 580–747; the sequence is LKLKHLIIEN…YPQSRGLVPK (168 aa). Residues 701–710 are compositionally biased toward polar residues; that stretch reads DASSFESTAN. Residues 711 to 721 show a composition bias toward basic residues; sequence KKSKARPKSGR. Positions 722–735 are enriched in low complexity; sequence KSGSSSSSSGTPAS.

This sequence belongs to the TRAFAC class myosin-kinesin ATPase superfamily. Kinesin family. Kinesin II subfamily. As to quaternary structure, heterodimer of KIF3A and KIF3B. KIF3A/KIF3B heterodimer interacts with KIFAP3 forming a heterotrimeric (KIF3A/KIF3B/KIFAP3) complex. Interacts directly with IFT20. Interacts with the SMC3 subunit of the cohesin complex. Interacts with FLCN.

The protein localises to the cytoplasm. It localises to the cytoskeleton. Its subcellular location is the cell projection. It is found in the cilium. The protein resides in the dendritic spine. In terms of biological role, microtubule-based molecular motor that transport intracellular cargos, such as vesicles, organelles and protein complexes. Uses ATP hydrolysis to generate force to bind and move along the microtubule. Plays a role in cilia formation. Involved in photoreceptor integrity and opsin trafficking in rod photoreceptors. Transports vesicles containing N-methyl-D-aspartate (NMDA) receptor subunit GRIN2A into neuronal dendrites. The chain is Kinesin-like protein KIF3B (KIF3B) from Homo sapiens (Human).